The chain runs to 627 residues: MVDDSNYLTPHETALAVVATAMKKARLQLDTLLINSILGGVLFSSGSFLLVAVYSEDPDIVARNPGIVNLITGVNFAMGLFYVVMMGADLFNSNILFFSVGVLRKAVTIYDLMISWVVSWLGNIAGSLFVSYLFGHLSGISSQKLWIIGSRQIIEQKVSYSFVQTFLKGIACNFFVCLAIYLQLMAKPIHVKFILMSFPIIDFIGIGFTHVVGDMSASFIAMLNGANVSVGKYIWKLLIPASLGNIVGGLFFSAVVPFYLHLVVVERDRKRLSLPEYEARDEQPELNMDSRVVRIQKNECDDDATETGEDLENLTEKGFASIYNTNHDNSSYFTGRSLNSLRSIPSSVITSDNVTMESDLGEPVQFIPKSNSTTRSPHLGLPHNLPHNHSIKSINRHRINKRHSLRSPPGVFPVRGMGEPLEREKTIEDATYDPKENELFLRRAETHNSAYVKNKKKEDDNLLRLVKTEEDREQKEYEKNGGYNILENKPGTRLEKIITHLAENVSSREVTPPILPRTTQDTFPHNAPASSPAYTDDAHSLRKANSTTLGGLFRAVSKEFHSSKDAESPDDLLKKMAAVGINRNARITANNVAGIVNLNKEDLDSTTRRQKITEPKNFYNRHTSPQL.

Residues 1-32 lie on the Extracellular side of the membrane; sequence MVDDSNYLTPHETALAVVATAMKKARLQLDTL. Residues 33 to 53 traverse the membrane as a helical segment; sequence LINSILGGVLFSSGSFLLVAV. Residues 54–66 lie on the Cytoplasmic side of the membrane; sequence YSEDPDIVARNPG. A helical transmembrane segment spans residues 67-87; that stretch reads IVNLITGVNFAMGLFYVVMMG. Residues 88 to 113 lie on the Extracellular side of the membrane; that stretch reads ADLFNSNILFFSVGVLRKAVTIYDLM. The helical transmembrane segment at 114-134 threads the bilayer; the sequence is ISWVVSWLGNIAGSLFVSYLF. Over 135–165 the chain is Cytoplasmic; the sequence is GHLSGISSQKLWIIGSRQIIEQKVSYSFVQT. Residues 166 to 186 form a helical membrane-spanning segment; sequence FLKGIACNFFVCLAIYLQLMA. The Extracellular segment spans residues 187 to 192; the sequence is KPIHVK. A helical membrane pass occupies residues 193–213; it reads FILMSFPIIDFIGIGFTHVVG. Topologically, residues 214–218 are cytoplasmic; that stretch reads DMSAS. A helical transmembrane segment spans residues 219 to 239; it reads FIAMLNGANVSVGKYIWKLLI. Residues 240–245 are Extracellular-facing; sequence PASLGN. A helical membrane pass occupies residues 246–266; it reads IVGGLFFSAVVPFYLHLVVVE. The Cytoplasmic segment spans residues 267–627; the sequence is RDRKRLSLPE…FYNRHTSPQL (361 aa). A Phosphothreonine modification is found at T305. Residues 512–537 form a disordered region; that stretch reads PPILPRTTQDTFPHNAPASSPAYTDD. The span at 517-533 shows a compositional bias: polar residues; it reads RTTQDTFPHNAPASSPA. Residue S546 is modified to Phosphoserine. Phosphothreonine is present on T588. The span at 605–614 shows a compositional bias: basic and acidic residues; sequence STTRRQKITE. A disordered region spans residues 605-627; the sequence is STTRRQKITEPKNFYNRHTSPQL.

The protein belongs to the FNT transporter (TC 1.A.16) family.

The protein localises to the membrane. This is an uncharacterized protein from Saccharomyces cerevisiae (strain ATCC 204508 / S288c) (Baker's yeast).